Reading from the N-terminus, the 688-residue chain is MLFHFLQAGLRQCRPPARLVGLETGLSGARGPSLPATLANYSRLRNACRPPWRSPWKPVKKGKLLAVLLGPAVLGVGVRAARCQVELIAPPLIVPQGARPEPEFNWAEFWKLLRPQLIALLTAVLLAFGAALLNIRIPLMLGELVNVVSRYTREHAGNYLQEVQGPALKLLCLYGAQGLLTCGYIVLLSRVGERVAGSMRKSLFFSLLRQDVAFFDAEKTGLLVNRLTSDVQEFKSSFKQVISQGLRSLTQTVGCFLSLYYISPKLTGLLLVVMPVLVGSGALIGSFLRKLSRRAQEQVARATGLADEALGNVRTVKAFAMESREMELYSAEVDKSSGQNEVLGVGIAVFQGLSNVVLNCIVLGTIFAGGSLMSSKELSAGELMSFLVASQTVQRSMANMSVLFGQVVRGLSAGGRVFEFMSLEPTIPLSGGFKLPVLRGEIHFKDVSFSYPTRPGHEVLRSFDLRIPHGKTVALVGQSGGGKSTVAALLERFYDPTEGAVQLDGVDIRILDPSWLRGEVIGFINQEPVLFGTTIIENIRFGRPDATDAEVHEAAIQANADSFIRSFPEGYNTMLGERGVTLSGGQKQRVAIARALLKDPKILILDEATSALDTESERAVQVALDRARSGRTVLVIAHRLSTISEADFIVVLSKGQVAEFGTHQDLLRRGGLYADLIRRQNQESQEAQ.

A mitochondrion-targeting transit peptide spans 1–31 (MLFHFLQAGLRQCRPPARLVGLETGLSGARG). 4 helical membrane passes run 115–135 (PQLIALLTAVLLAFGAALLNI), 168–188 (LKLLCLYGAQGLLTCGYIVLL), 268–288 (GLLLVVMPVLVGSGALIGSFL), and 342–362 (VLGVGIAVFQGLSNVVLNCIV). Positions 121-409 (LTAVLLAFGA…MSVLFGQVVR (289 aa)) constitute an ABC transmembrane type-1 domain. The ABC transporter domain maps to 442–679 (IHFKDVSFSY…GGLYADLIRR (238 aa)). 477-484 (GQSGGGKS) lines the ATP pocket.

The protein belongs to the ABC transporter superfamily. ABCB family. Multidrug resistance exporter (TC 3.A.1.201) subfamily. Component of the mitochondrial potassium channel (mitoK(ATP)).

The protein resides in the mitochondrion inner membrane. Its function is as follows. ATP-binding subunit of the mitochondrial ATP-gated potassium channel (mitoK(ATP)). Together with pore-forming subunit CCDC51/MITOK of the mitoK(ATP) channel, mediates ATP-dependent potassium currents across the mitochondrial inner membrane. An increase in ATP intracellular levels closes the channel, inhibiting K(+) transport, whereas a decrease in ATP levels enhances K(+) uptake in the mitochondrial matrix. Plays a role in mitochondrial iron transport. Required for maintenance of normal cardiac function, possibly by influencing mitochondrial iron export and regulating the maturation of cytosolic iron sulfur cluster-containing enzymes. This chain is Mitochondrial potassium channel ATP-binding subunit, found in Xenopus tropicalis (Western clawed frog).